The sequence spans 2003 residues: Neurogenic locus notch homolog protein 4 (2003 aa).

The signal sequence occupies residues 1–23 (MQPPSLLLLLLLLLLLCVSVVRP). 4 consecutive EGF-like domains span residues 24 to 63 (RGLLCGSFPEPCANGGTCLSLSLGQGTCQCAPGFLGETCQ), 64 to 115 (FPDP…ERCQ), 118 to 155 (LEDPCPPSFCSKRGRCHIQASGRPQCSCMPGWTGEQCQ), and 156 to 192 (LRDFCSANPCVNGGVCLATYPQIQCHCPPGFEGHACE). Over 24-1447 (RGLLCGSFPE…TAPPANQLPW (1424 aa)) the chain is Extracellular. Disulfide bonds link C28/C41, C35/C51, C53/C62, C68/C80, C74/C103, C105/C114, C122/C133, C127/C143, C145/C154, C160/C171, C165/C180, C182/C191, C198/C211, C205/C220, C222/C231, C238/C249, C243/C262, C264/C273, C280/C291, C285/C300, C302/C311, C318/C332, C326/C341, C343/C352, C359/C370, C364/C379, C381/C390, C396/C407, C401/C418, C420/C429, C436/C452, C446/C461, C463/C472, C479/C490, C484/C499, C501/C510, C517/C528, C522/C537, C539/C548, C555/C566, C560/C575, C577/C586, C593/C604, C598/C613, C615/C624, C629/C640, C634/C649, and C651/C658. An EGF-like 5; calcium-binding domain is found at 194–232 (DVNECFQDPGPCPKGTSCHNTLGSFQCLCPVGQEGPRCE). Positions 234-274 (RAGPCPPRGCSNGGTCQLMPEKDSTFHLCLCPPGFIGPDCE) constitute an EGF-like 6 domain. In terms of domain architecture, EGF-like 7; calcium-binding spans 276–312 (NPDNCVSHQCQNGGTCQDGLDTYTCLCPETWTGWDCS). The EGF-like 8; calcium-binding domain maps to 314 to 353 (DVDECETQGPPHCRNGGTCQNSAGSFHCVCVSGWGGTSCE). Residues 355 to 391 (NLDDCIAATCAPGSTCIDRVGSFSCLCPPGRTGLLCH) enclose the EGF-like 9; calcium-binding domain. Positions 392–430 (LEDMCLSQPCHGDAQCSTNPLTGSTLCLCQPGYSGPTCH) constitute an EGF-like 10 domain. An EGF-like 11; calcium-binding domain is found at 432-473 (DLDECLMAQQGPSPCEHGGSCLNTPGSFNCLCPPGYTGSRCE). The EGF-like 12; calcium-binding domain occupies 475–511 (DHNECLSQPCHPGSTCLDLLATFHCLCPPGLEGQLCE). The EGF-like 13; calcium-binding domain maps to 513–549 (ETNECASAPCLNHADCHDLLNGFQCICLPGFSGTRCE). Residues 551–587 (DIDECRSSPCANGGQCQDQPGAFHCKCLPGFEGPRCQ) form the EGF-like 14; calcium-binding domain. In terms of domain architecture, EGF-like 15; calcium-binding spans 589–625 (EVDECLSDPCPVGASCLDLPGAFFCLCPSGFTGQLCE). 14 consecutive EGF-like domains span residues 626–659 (VPLCAPNLCQPKQICKDQKDKANCLCPDGSPGCA), 661–689 (PEDNCTCHHGHCQRSSCVCDVGWTGPECE), 691–727 (ELGGCISAPCAHGGTCYPQPSGYNCTCPTGYTGPTCS), 729–765 (EMTACHSGPCLNGGSCNPSPGGYYCTCPPSHTGPQCQ), 767–803 (STDYCVSAPCFNGGTCVNRPGTFSCLCAMGFQGPRCE), 806–842 (LRPSCADSPCRNRATCQDSPQGPRCLCPTGYTGGSCQ), 844–880 (LMDLCAQKPCPRNSHCLQTGPSFHCLCLQGWTGPLCN), 882–928 (PLSS…SLCQ), 930–966 (HVNPCESRPCQNGATCMAQPSGYLCQCAPGYDGQNCS), 968–1004 (ELDACQSQPCHNHGTCTPKPGGFHCACPPGFVGLRCE), 1006–1044 (DVDECLDQPCHPTGTAACHSLANAFYCQCLPGHTGQWCE), 1046–1085 (EIDPCHSQPCFHGGTCEATAGSPLGFICHCPKGFEGPTCS), 1087–1126 (RAPSCGFHHCHHGGLCLPSPKPGFPPRCACLSGYGGPDCL), and 1130–1171 (APKG…PRCQ). Residue N664 is glycosylated (N-linked (GlcNAc...) asparagine). 47 cysteine pairs are disulfide-bonded: C665/C672, C667/C677, C679/C688, C695/C706, C700/C715, C717/C726, C733/C744, C738/C753, C755/C764, C771/C782, C776/C791, C793/C802, C810/C821, C815/C830, C832/C841, C848/C859, C853/C868, C870/C879, C886/C907, C901/C916, C918/C927, C934/C945, C939/C954, C956/C965, C972/C983, C977/C992, C994/C1003, C1010/C1023, C1015/C1032, C1034/C1043, C1050/C1061, C1055/C1073, C1075/C1084, C1091/C1102, C1096/C1114, C1116/C1125, C1134/C1146, C1140/C1159, C1161/C1170, C1178/C1191, C1187/C1203, C1214/C1238, C1220/C1233, C1229/C1245, C1251/C1277, C1259/C1272, and C1268/C1284. N-linked (GlcNAc...) asparagine glycosylation occurs at N714. Residue N964 is glycosylated (N-linked (GlcNAc...) asparagine). N1143 is a glycosylation site (N-linked (GlcNAc...) asparagine). LNR repeat units lie at residues 1170 to 1213 (CQKP…PWKG), 1214 to 1250 (CPSHSRCWLLFRDGQCHPQCDSEECLFDGYDCETPPA), and 1251 to 1294 (CTPA…PEWG). The interval 1347-1371 (AEEKLGGTRDPTYQERAAPQTQPLG) is disordered. The chain crosses the membrane as a helical span at residues 1448–1468 (PVLCSPVAGVILLALGALLVL). Residues 1469 to 2003 (QLIRRRRREH…PINQGGEGKK (535 aa)) are Cytoplasmic-facing. Positions 1485–1508 (PGFTRRPRTQSAPHRRRPPLGEDS) are disordered. Residues 1489–1502 (RRPRTQSAPHRRRP) are compositionally biased toward basic residues. ANK repeat units follow at residues 1633 to 1665 (TGETPLHLAARFSRPTAARRLLEAGANPNQPDR), 1666 to 1698 (AGRTPLHAAVAADAREVCQLLLRSRQTAVDART), 1700 to 1732 (DGTTPLMLAARLAVEDLVEELIAAQADVGARDK), 1733 to 1765 (WGKTALHWAAAVNNARAARSLLQAGADKDAQDN), and 1766 to 1798 (REQTPLFLAAREGAVEVAQLLLGLGAARELRDQ). 2 disordered regions span residues 1900-1927 (LSGVGAGGGPTPRGRRFSAGMRGPRPNP) and 1968-2003 (PPPCLTPSPERGSPQLDCGPPALQEMPINQGGEGKK).

This sequence belongs to the NOTCH family. Heterodimer of a C-terminal fragment N(TM) and a N-terminal fragment N(EC) which are probably linked by disulfide bonds. Interacts with MAML1, MAML2 and MAML3 which act as transcriptional coactivators for NOTCH4. As to quaternary structure, (Microbial infection) Interacts with Epstein-Barr virus (EBV) RK-BARF0. In terms of processing, synthesized in the endoplasmic reticulum as an inactive form which is proteolytically cleaved by a furin-like convertase in the trans-Golgi network before it reaches the plasma membrane to yield an active, ligand-accessible form. Cleavage results in a C-terminal fragment N(TM) and a N-terminal fragment N(EC). Following ligand binding, it is cleaved by TNF-alpha converting enzyme (TACE) to yield a membrane-associated intermediate fragment called notch extracellular truncation (NEXT). This fragment is then cleaved by presenilin dependent gamma-secretase to release a notch-derived peptide containing the intracellular domain (NICD) from the membrane. Post-translationally, phosphorylated. In terms of tissue distribution, highly expressed in the heart, moderately in the lung and placenta and at low levels in the liver, skeletal muscle, kidney, pancreas, spleen, lymph node, thymus, bone marrow and fetal liver. No expression was seen in adult brain or peripheral blood leukocytes.

Its subcellular location is the cell membrane. It localises to the nucleus. Its function is as follows. Functions as a receptor for membrane-bound ligands Jagged1, Jagged2 and Delta1 to regulate cell-fate determination. Upon ligand activation through the released notch intracellular domain (NICD) it forms a transcriptional activator complex with RBPJ/RBPSUH and activates genes of the enhancer of split locus. Affects the implementation of differentiation, proliferation and apoptotic programs. May regulate branching morphogenesis in the developing vascular system. The polypeptide is Neurogenic locus notch homolog protein 4 (Homo sapiens (Human)).